The chain runs to 449 residues: Xylose isomerase (449 aa).

Active-site residues include H101 and D104. Residues E232, E268, H271, D296, D307, D309, and D340 each contribute to the Mg(2+) site.

The protein belongs to the xylose isomerase family. In terms of assembly, homotetramer. The cofactor is Mg(2+).

Its subcellular location is the cytoplasm. It carries out the reaction alpha-D-xylose = alpha-D-xylulofuranose. This chain is Xylose isomerase, found in Bifidobacterium longum (strain DJO10A).